Reading from the N-terminus, the 533-residue chain is Glucose-6-phosphate isomerase (533 aa).

E330 serves as the catalytic Proton donor. Residues H359 and K461 contribute to the active site.

It belongs to the GPI family.

The protein resides in the cytoplasm. The enzyme catalyses alpha-D-glucose 6-phosphate = beta-D-fructose 6-phosphate. It participates in carbohydrate biosynthesis; gluconeogenesis. Its pathway is carbohydrate degradation; glycolysis; D-glyceraldehyde 3-phosphate and glycerone phosphate from D-glucose: step 2/4. Catalyzes the reversible isomerization of glucose-6-phosphate to fructose-6-phosphate. This is Glucose-6-phosphate isomerase from Prochlorococcus marinus (strain SARG / CCMP1375 / SS120).